The primary structure comprises 156 residues: MVRQSISLKAELEEIQNIFPATYKIFFLKIKCSNCGEIPDKWIGLDKSNIEVIGKSNVNLATKCKGCNRENSIVIEDTDYSSRTIESEKDFEIARFDCRGVEIEEFDPRDNWIVVSSSGKEYKDVDLEEGEWSEFEERTSTSLTILSIESSIKKIK.

The Zn(2+) site is built by C32, C35, C64, and C67.

This sequence belongs to the UPF0587 family.

The sequence is that of UPF0587 protein from Dictyostelium discoideum (Social amoeba).